Consider the following 251-residue polypeptide: Probable transcriptional regulatory protein Pmob_0807 (251 aa).

Residues 1–22 (MSGHNKWANIKHRKGAQDAKRS) are disordered.

This sequence belongs to the TACO1 family.

The protein resides in the cytoplasm. The sequence is that of Probable transcriptional regulatory protein Pmob_0807 from Petrotoga mobilis (strain DSM 10674 / SJ95).